Reading from the N-terminus, the 295-residue chain is Bifunctional protein FolD (295 aa).

NADP(+) is bound by residues 165 to 167 (GRS), S190, and I231.

It belongs to the tetrahydrofolate dehydrogenase/cyclohydrolase family. In terms of assembly, homodimer.

The catalysed reaction is (6R)-5,10-methylene-5,6,7,8-tetrahydrofolate + NADP(+) = (6R)-5,10-methenyltetrahydrofolate + NADPH. It carries out the reaction (6R)-5,10-methenyltetrahydrofolate + H2O = (6R)-10-formyltetrahydrofolate + H(+). The protein operates within one-carbon metabolism; tetrahydrofolate interconversion. Catalyzes the oxidation of 5,10-methylenetetrahydrofolate to 5,10-methenyltetrahydrofolate and then the hydrolysis of 5,10-methenyltetrahydrofolate to 10-formyltetrahydrofolate. The polypeptide is Bifunctional protein FolD (Nitrosomonas europaea (strain ATCC 19718 / CIP 103999 / KCTC 2705 / NBRC 14298)).